Reading from the N-terminus, the 1673-residue chain is Glutamine and serine-rich protein 1 (1673 aa).

Disordered stretches follow at residues 265–322 (VIPS…SSQA), 411–543 (DQTR…KSYV), 872–892 (RHMS…LSIN), 923–961 (QDLP…PKEG), 1050–1081 (DENA…QYSS), 1149–1182 (VIRP…KAEE), 1216–1272 (LSAL…EQLA), and 1390–1476 (KSKV…PPPI). Residues 289–309 (SSKTPKSQSVVSPELTQSYTK) show a composition bias toward polar residues. Composition is skewed to low complexity over residues 310–322 (SSQN…SSQA) and 411–458 (DQTR…PSDS). Polar residues predominate over residues 459 to 539 (YTSGQNQTLA…MQNSRTTADS (81 aa)). Polar residues predominate over residues 947–956 (NIKNPPNVNQ). Residues 1222-1233 (NSEKRLKTEGDK) are compositionally biased toward basic and acidic residues. Composition is skewed to polar residues over residues 1259–1272 (KPSQ…EQLA) and 1397–1411 (ARTT…SKVS). A compositionally biased stretch (basic and acidic residues) spans 1435-1451 (TKAEPPPKKRKQWKEEF). Positions 1452-1462 (SSSQSDSSPDM) are enriched in low complexity.

It localises to the chromosome. In terms of biological role, plays an essential role in the protection and maintenance of transcriptional and developmental programs. Protects many bivalent promoters and poised enhancers from hypermethylation, showing a marked preference for these regulatory elements over other types of promoters or enhancers. Mechanistically, cooperates with tet1 and binds to DNA in a common complex to inhibit the binding of dnmt3a/3b and therefore de novo methylation. This is Glutamine and serine-rich protein 1 (qser1) from Xenopus laevis (African clawed frog).